Consider the following 243-residue polypeptide: Small ribosomal subunit protein uS3 (243 aa).

A KH type-2 domain is found at 39-107; sequence MRKFVMSELK…ETHLNIVEVR (69 aa). The interval 214 to 243 is disordered; that stretch reads ASERRAMEGDAQGPASRDRDRDRDRRRDNA. Basic and acidic residues predominate over residues 229–243; the sequence is SRDRDRDRDRRRDNA.

Belongs to the universal ribosomal protein uS3 family. In terms of assembly, part of the 30S ribosomal subunit. Forms a tight complex with proteins S10 and S14.

Its function is as follows. Binds the lower part of the 30S subunit head. Binds mRNA in the 70S ribosome, positioning it for translation. The chain is Small ribosomal subunit protein uS3 from Rhizobium johnstonii (strain DSM 114642 / LMG 32736 / 3841) (Rhizobium leguminosarum bv. viciae).